The primary structure comprises 185 residues: UPF0301 protein HCH_00550 (185 aa).

The protein belongs to the UPF0301 (AlgH) family.

The protein is UPF0301 protein HCH_00550 of Hahella chejuensis (strain KCTC 2396).